An 881-amino-acid polypeptide reads, in one-letter code: Putative leucine-rich repeat receptor-like protein kinase At2g19210 (881 aa).

A signal peptide spans 1-25; that stretch reads MVHYNFLSLIIFACFFAVFVLLVRA. Over 26-518 the chain is Extracellular; the sequence is QDQSGFVSID…SDEKTKKNVY (493 aa). N-linked (GlcNAc...) asparagine glycosylation is found at Asn-143, Asn-234, Asn-295, Asn-310, Asn-404, Asn-419, Asn-435, Asn-446, and Asn-462. 2 LRR repeats span residues 438–460 and 462–483; these read LLHILDLSNNSLTGKIPDFLGNL and NLTELNLEGNKLSGAIPVKLLE. Residues 519 to 539 form a helical membrane-spanning segment; sequence IIPLVASVVGVLGLVLAIALF. At 540–881 the chain is on the cytoplasmic side; sequence LLYKKRHRRG…FDSGMFPQAR (342 aa). The Protein kinase domain occupies 576–850; sequence NNFERVLGQG…HVVAELKESV (275 aa). Residues 582–590 and Lys-603 each bind ATP; that span reads LGQGGFGKV. At Tyr-648 the chain carries Phosphotyrosine. Catalysis depends on Asp-699, which acts as the Proton acceptor. Phosphothreonine occurs at positions 734 and 739. A Phosphotyrosine modification is found at Tyr-747. Positions 851-881 are disordered; sequence SRARAGGGSGASSVTDPAMTNFDSGMFPQAR.

This sequence belongs to the protein kinase superfamily. Ser/Thr protein kinase family.

It localises to the cell membrane. The enzyme catalyses L-seryl-[protein] + ATP = O-phospho-L-seryl-[protein] + ADP + H(+). It carries out the reaction L-threonyl-[protein] + ATP = O-phospho-L-threonyl-[protein] + ADP + H(+). This Arabidopsis thaliana (Mouse-ear cress) protein is Putative leucine-rich repeat receptor-like protein kinase At2g19210.